Reading from the N-terminus, the 443-residue chain is NADH-ubiquinone oxidoreductase chain 4 (443 aa).

15 helical membrane passes run Met1–His21, Val27–Phe47, Gly71–Leu91, Thr93–Val113, Leu114–Ile134, Ile148–Ser168, Val187–Leu207, Pro217–Leu237, Phe247–Thr267, Ile279–Ser299, Phe308–Tyr328, Phe335–Leu355, Ala362–Val382, Leu385–Phe405, and Glu423–Ala443.

Belongs to the complex I subunit 4 family.

It is found in the mitochondrion membrane. The catalysed reaction is a ubiquinone + NADH + 5 H(+)(in) = a ubiquinol + NAD(+) + 4 H(+)(out). Its function is as follows. Core subunit of the mitochondrial membrane respiratory chain NADH dehydrogenase (Complex I) that is believed to belong to the minimal assembly required for catalysis. Complex I functions in the transfer of electrons from NADH to the respiratory chain. The immediate electron acceptor for the enzyme is believed to be ubiquinone. The polypeptide is NADH-ubiquinone oxidoreductase chain 4 (ND4) (Chlamydomonas reinhardtii (Chlamydomonas smithii)).